The following is an 816-amino-acid chain: Subtilisin-like protease SBT2.6 (816 aa).

The signal sequence occupies residues Met-1 to Ala-19. A propeptide spans Glu-20 to Leu-126 (activation peptide). Residues Tyr-22–Arg-124 enclose the Inhibitor I9 domain. The 553-residue stretch at Asp-120 to Leu-672 folds into the Peptidase S8 domain. Residues Asp-160 and His-235 each act as charge relay system in the active site. The PA domain occupies Asp-418–Asp-492. Asn-504 and Asn-578 each carry an N-linked (GlcNAc...) asparagine glycan. The active-site Charge relay system is the Ser-597. Asn-702 carries N-linked (GlcNAc...) asparagine glycosylation.

This sequence belongs to the peptidase S8 family.

It is found in the secreted. This is Subtilisin-like protease SBT2.6 from Arabidopsis thaliana (Mouse-ear cress).